The sequence spans 1067 residues: Zinc finger MIZ domain-containing protein 1 (1067 aa).

The sufficient for transactivation activity; sufficient for interaction with NOTCH1 stretch occupies residues 1–120 (MNSMDRHIQQ…HQKSRQSDPP (120 aa)). Residue K91 forms a Glycyl lysine isopeptide (Lys-Gly) (interchain with G-Cter in SUMO2) linkage. Disordered regions lie at residues 112–141 (QKSRQSDPPGKLPMQPPLSSMSSMKPTLSH) and 327–542 (NSQF…PFPP). Over residues 128–141 (PLSSMSSMKPTLSH) the composition is skewed to low complexity. A compositionally biased stretch (polar residues) spans 413–429 (YGNQQYGPNSQFPTQPG). The span at 431 to 440 (YPAPNPPRPL) shows a compositional bias: pro residues. Positions 479–497 (NNTFSGSSYSNYSQGNVNR) are enriched in low complexity. Pro residues predominate over residues 510–521 (SPVPGNPTPPMT). The SP-RING-type zinc-finger motif lies at 727-808 (GEDGVEQTAI…MWGILNAIQH (82 aa)). C758, H760, C781, and C784 together coordinate Zn(2+). Residues K834 and K843 each participate in a glycyl lysine isopeptide (Lys-Gly) (interchain with G-Cter in SUMO2) cross-link. The tract at residues 837–1067 (PDGIPSKRFK…DDLLSLFENN (231 aa)) is transactivation domain. A compositionally biased stretch (pro residues) spans 868-879 (GPSPYPLPPPPG). The disordered stretch occupies residues 868–1067 (GPSPYPLPPP…DDLLSLFENN (200 aa)). 2 stretches are compositionally biased toward polar residues: residues 881–895 (TNSNDYSSQGNNYQG) and 951–961 (SSDQPHPSIQQ). A compositionally biased stretch (pro residues) spans 981–996 (APPPPPSQPPRQPPQA). A compositionally biased stretch (low complexity) spans 1040 to 1067 (PDELLSYLDPPDLPSNSNDDLLSLFENN).

In terms of assembly, interacts with AR, but not with ESR1, NR3C1, PGR, THRB nor VDR. Interacts with NOTCH1 and RBPJ. Interacts with SMARCA4. Interacts (via SP-RING-type domain) with SMAD3 and SMAD4 (via MH2 domain). As to expression, expressed most abundantly in ovary and, at lower levels, in prostate, spleen and testis. Weak expression, if any, in thymus, small intestine, colon and peripheral blood leukocytes.

The protein resides in the nucleus. Its subcellular location is the nucleoplasm. It is found in the cytoplasm. Its function is as follows. Acts as a transcriptional coactivator. Increases ligand-dependent transcriptional activity of AR and promotes AR sumoylation. The stimulation of AR activity is dependent upon sumoylation. Also functions as a transcriptional coactivator in the TGF-beta signaling pathway by increasing the activity of the SMAD3/SMAD4 transcriptional complex. Involved in transcriptional activation of a subset of NOTCH1 target genes including MYC. Involved in thymocyte and T cell development. Involved in the regulation of postmitotic positioning of pyramidal neurons in the developing cerebral cortex. The protein is Zinc finger MIZ domain-containing protein 1 of Homo sapiens (Human).